Consider the following 2552-residue polypeptide: Probable polyketide synthase 40 (2552 aa).

One can recognise a Ketosynthase family 3 (KS3) domain in the interval 13–443; it reads CNKVAIIGIG…GSNCCLIVSS (431 aa). Catalysis depends on for beta-ketoacyl synthase activity residues C179, H320, and H362. The interval 629–662 is acyl/malonyl transferase; the sequence is GIKPSIIVGHSLGEISSSYCSGMIDLDTFCYLIY. S639 serves as the catalytic For acyl/malonyl transferase activity. Positions 928–1063 are N-terminal hotdog fold; the sequence is INHLGISNSN…ANFQLFSRGQ (136 aa). A PKS/mFAS DH domain is found at 928 to 1235; the sequence is INHLGISNSN…FKSTTKIKDS (308 aa). H962 (proton acceptor; for dehydratase activity) is an active-site residue. The interval 1087–1235 is C-terminal hotdog fold; sequence NLTKLSKQEL…FKSTTKIKDS (149 aa). D1149 serves as the catalytic Proton donor; for dehydratase activity. The region spanning 2467–2546 is the Carrier domain; it reads DNVELTVDQL…SFIQLVKNSI (80 aa). S2505 is modified (O-(pantetheine 4'-phosphoryl)serine).

Pantetheine 4'-phosphate is required as a cofactor.

Probable polyketide synthase. The chain is Probable polyketide synthase 40 (pks40) from Dictyostelium discoideum (Social amoeba).